Reading from the N-terminus, the 301-residue chain is Large ribosomal subunit protein uL18y (301 aa).

Residues 247-267 form a disordered region; it reads RAEPNHKKTEKSAPKEHKRYN. Over residues 249–261 the composition is skewed to basic and acidic residues; it reads EPNHKKTEKSAPK.

The protein belongs to the universal ribosomal protein uL18 family. In terms of assembly, component of the large ribosomal subunit (LSU).

The protein resides in the cytoplasm. It localises to the nucleus. Its subcellular location is the nucleolus. The protein localises to the nucleoplasm. In terms of biological role, component of the ribosome, a large ribonucleoprotein complex responsible for the synthesis of proteins in the cell. The small ribosomal subunit (SSU) binds messenger RNAs (mRNAs) and translates the encoded message by selecting cognate aminoacyl-transfer RNA (tRNA) molecules. The large subunit (LSU) contains the ribosomal catalytic site termed the peptidyl transferase center (PTC), which catalyzes the formation of peptide bonds, thereby polymerizing the amino acids delivered by tRNAs into a polypeptide chain. The nascent polypeptides leave the ribosome through a tunnel in the LSU and interact with protein factors that function in enzymatic processing, targeting, and the membrane insertion of nascent chains at the exit of the ribosomal tunnel. Seems involved in the regulation of cell proliferation. Essential in leaf polarity establishment, probably having a role for translation in leaf dorsoventral patterning to specify leaf adaxial identity. The sequence is that of Large ribosomal subunit protein uL18y from Arabidopsis thaliana (Mouse-ear cress).